A 178-amino-acid polypeptide reads, in one-letter code: Large ribosomal subunit protein uL6 (178 aa).

This sequence belongs to the universal ribosomal protein uL6 family. In terms of assembly, part of the 50S ribosomal subunit.

Functionally, this protein binds to the 23S rRNA, and is important in its secondary structure. It is located near the subunit interface in the base of the L7/L12 stalk, and near the tRNA binding site of the peptidyltransferase center. This Halobacterium salinarum (strain ATCC 700922 / JCM 11081 / NRC-1) (Halobacterium halobium) protein is Large ribosomal subunit protein uL6.